We begin with the raw amino-acid sequence, 126 residues long: Nascent polypeptide-associated complex protein (126 aa).

The NAC-A/B domain occupies 10 to 77; sequence PRMMKQMQKM…AKKVAKAEEK (68 aa).

The protein belongs to the NAC-alpha family. In terms of assembly, homodimer. Interacts with the ribosome. Binds ribosomal RNA.

Its function is as follows. Contacts the emerging nascent chain on the ribosome. The sequence is that of Nascent polypeptide-associated complex protein from Methanococcus maripaludis (strain C6 / ATCC BAA-1332).